We begin with the raw amino-acid sequence, 520 residues long: Chaperone Ric-8B (520 aa).

S468 is subject to Phosphoserine. T473 carries the phosphothreonine modification.

It belongs to the synembryn family. In terms of assembly, interacts with GDP-bound G(s) G-alpha proteins GNAL and GNAS. Does not interact with G-alpha proteins when they are in complex with subunits beta and gamma. As to expression, predominantly expressed in the mature olfactory sensory neurons and also in a few regions in the brain.

The protein localises to the cytoplasm. It localises to the cell cortex. Its function is as follows. Chaperone that specifically binds and folds nascent G(s) G-alpha proteins (GNAS and GNAL) prior to G protein heterotrimer formation, promoting their association with the plasma membrane. Also acts as a guanine nucleotide exchange factor (GEF) for G(s) proteins by stimulating exchange of bound GDP for free GTP. Acts as an important component for odorant signal transduction by mediating GNAL (G(olf)-alpha) folding, thereby promoting-dependent cAMP accumulation in olfactory sensory neurons. The chain is Chaperone Ric-8B from Mus musculus (Mouse).